The chain runs to 1399 residues: Alpha-glucan water dikinase 1, chloroplastic (1399 aa).

The N-terminal 75 residues, Met1–Ala75, are a transit peptide targeting the chloroplast. Val76 bears the N-acetylvaline mark. Residues Leu265–Ile306 are disordered. Residues Asn272 to Ser283 are compositionally biased toward polar residues. A compositionally biased stretch (basic and acidic residues) spans Gly284–Ile306. The active-site Tele-phosphohistidine intermediate is His1004.

It belongs to the PEP-utilizing enzyme family. In terms of assembly, homodimer. It depends on Mg(2+) as a cofactor.

The protein localises to the plastid. Its subcellular location is the chloroplast. It carries out the reaction [(1-&gt;4)-alpha-D-glucosyl](n) + n ATP + n H2O = [(1-&gt;4)-6-phospho-alpha-D-glucosyl](n) + n AMP + n phosphate + 2n H(+). In terms of biological role, mediates the incorporation of phosphate into starch-like alpha-glucan, mostly at the C-6 position of glucose units. Acts as an overall regulator of starch mobilization. Required for starch degradation, suggesting that the phosphate content of starch regulates its degradability. The chain is Alpha-glucan water dikinase 1, chloroplastic from Arabidopsis thaliana (Mouse-ear cress).